Here is a 115-residue protein sequence, read N- to C-terminus: Iron-sulfur cluster insertion protein ErpA (115 aa).

Iron-sulfur cluster-binding residues include C43, C107, and C109.

It belongs to the HesB/IscA family. Homodimer. Requires iron-sulfur cluster as cofactor.

Its function is as follows. Required for insertion of 4Fe-4S clusters for at least IspG. In Photorhabdus laumondii subsp. laumondii (strain DSM 15139 / CIP 105565 / TT01) (Photorhabdus luminescens subsp. laumondii), this protein is Iron-sulfur cluster insertion protein ErpA.